The primary structure comprises 227 residues: Ubiquitin domain-containing protein 1 (227 aa).

The tract at residues Met1–Met42 is disordered. The span at Gly24–Ser38 shows a compositional bias: basic and acidic residues. The region spanning Phe149 to Pro224 is the Ubiquitin-like domain.

As to quaternary structure, interacts with UBTD1.

In terms of biological role, may be involved in the regulation of cellular senescence through a positive feedback loop with TP53. Is a TP53 downstream target gene that increases the stability of TP53 protein by promoting the ubiquitination and degradation of MDM2. The chain is Ubiquitin domain-containing protein 1 (Ubtd1) from Mus musculus (Mouse).